A 675-amino-acid chain; its full sequence is Protein PALS1 (675 aa).

Disordered regions lie at residues 1–32 (MTTS…HPKH) and 52–79 (RSAQ…KQEL). The tract at residues 1 to 345 (MTTSYMNGHV…QQIKPPPAKE (345 aa)) is required for the correct localization of PALS1 and PATJ at cell-cell contacts and the normal formation of tight junctions and adherens junctions. A phosphoserine mark is found at Ser-14 and Ser-25. An interaction with PARD6B region spans residues 21–140 (LGLASPEEHP…LKHIQHTLVD (120 aa)). The segment covering 54–79 (AQLERIRQQQEDMRRRREEEGKKQEL) has biased composition (basic and acidic residues). Phosphoserine occurs at positions 83 and 84. 2 consecutive L27 domains span residues 120–177 (KILE…NKAS) and 179–235 (PFPL…MQLE). The segment at 181-243 (PLIANVQDLV…LEPITDERVY (63 aa)) is interaction with LIN7C. Residues 256–336 (IVRIEKARDI…TLTFVLIPSQ (81 aa)) form the PDZ domain. The region spanning 345–417 (ETVIHVKAHF…PGKSFQQQRE (73 aa)) is the SH3 domain. The Guanylate kinase-like domain maps to 479–660 (KRPIILIGPQ…AYQELLRLIN (182 aa)). 486 to 493 (GPQNCGQN) is an ATP binding site.

It belongs to the MAGUK family. In terms of assembly, heterodimer with MPP1. Forms a heterotrimeric complex composed of PALS1, LIN7B and PATJ; the N-terminal L27 domain of PALS1 interacts with the L27 domain of PATJ and the C-terminal L27 domain of PALS1 interacts with the L27 domain of LIN7B. Component of a complex composed of PALS1, CRB1 and MPP4. Component of a complex whose core is composed of ARHGAP17, AMOT, PALS1, PATJ and PARD3/PAR3. Component of a complex composed of PALS1, CRB1 and EPB41L5. Within the complex, interacts (via HOOK domain) with EPB41L5 (via FERM domain), and interacts with CRB1 (via intracellular domain). Component of a complex composed of PALS1, MPP3 and CRB1; PALS1 acts as a bridging protein between MPP3 (via guanylate kinase-like domain) and CRB1. Component of a complex composed of CRB3, PALS1 and PATJ. As part of the Crumbs complex; interacts with WWP1, the interaction is enhanced by AMOTL2 and facilitates WWP1 localization to the plasma membrane. The Crumbs complex promotes monoubiquitination of AMOTL2 by WWP1, which activates the Hippo signaling pathway. Interacts (via PDZ domain) with PATJ (via N-terminus). Interacts with EZR. Interacts (via PDZ domain) with CRB1 (via C-terminal ERLI motif). While the PDZ domain is sufficient for interaction with CRB1, the adjacent SH3 and guanylate kinase-like domains are likely to contribute to a high affinity interaction. Interacts with WWTR1/TAZ (via WW domain). Interacts with MPP7. Interacts (via PDZ domain) with CRB3 (via C-terminus). Interacts with LIN7C. Interacts with MPDZ. Interacts with PARD6B. Interacts with SC6A1. Interacts with CDH5; the interaction promotes PALS1 localization to cell junctions and is required for CDH5-mediated vascular lumen formation and endothelial cell. Interacts with NPHP1 (via coiled coil and SH3 domains). Interacts with NPHP4. Interacts with CRB2.

Its subcellular location is the golgi apparatus. The protein resides in the cell membrane. It is found in the endomembrane system. The protein localises to the cell junction. It localises to the tight junction. Its subcellular location is the adherens junction. The protein resides in the cell projection. It is found in the axon. The protein localises to the perikaryon. It localises to the apical cell membrane. In terms of biological role, plays a role in tight junction biogenesis and in the establishment of cell polarity in epithelial cells. Also involved in adherens junction biogenesis by ensuring correct localization of the exocyst complex protein EXOC4/SEC8 which allows trafficking of adherens junction structural component CDH1 to the cell surface. Plays a role through its interaction with CDH5 in vascular lumen formation and endothelial membrane polarity. Required during embryonic and postnatal retinal development. Required for the maintenance of cerebellar progenitor cells in an undifferentiated proliferative state, preventing premature differentiation, and is required for cerebellar histogenesis, fissure formation, cerebellar layer organization and cortical development. Plays a role in neuronal progenitor cell survival, potentially via promotion of mTOR signaling. Plays a role in the radial and longitudinal extension of the myelin sheath in Schwann cells. May modulate SC6A1/GAT1-mediated GABA uptake by stabilizing the transporter. May play a role in the T-cell receptor-mediated activation of NF-kappa-B. Required for localization of EZR to the apical membrane of parietal cells and may play a role in the dynamic remodeling of the apical cytoskeleton. Required for the normal polarized localization of the vesicular marker STX4. Required for the correct trafficking of the myelin proteins PMP22 and MAG. Involved in promoting phosphorylation and cytoplasmic retention of transcriptional coactivators YAP1 and WWTR1/TAZ which leads to suppression of TGFB1-dependent transcription of target genes such as CCN2/CTGF, SERPINE1/PAI1, SNAI1/SNAIL1 and SMAD7. The polypeptide is Protein PALS1 (Rattus norvegicus (Rat)).